We begin with the raw amino-acid sequence, 965 residues long: Collagen alpha-1(I) chain (965 aa).

Positions 1–965 (GGISVPGPMG…PGPPGPPGPP (965 aa)) are disordered. Residues Pro18, Pro21, Pro23, Pro32, Pro35, Pro38, Pro53, Pro68, Pro74, Pro83, and Pro89 each carry the 4-hydroxyproline modification. A compositionally biased stretch (low complexity) spans 26-44 (QGFQGPPGEPGEPGSSGPM). Basic and acidic residues predominate over residues 56 to 70 (NGDDGEAGKPGRPGE). Residue Lys92 is modified to 5-hydroxylysine; alternate. An O-linked (Gal...) hydroxylysine; alternate glycan is attached at Lys92. A Phosphoserine modification is found at Ser98. The segment covering 106–122 (DAGPAGPKGEPGSPGEN) has biased composition (low complexity). Residues Pro116, Pro119, Pro125, Pro139, Pro160, Pro169, Pro172, Pro199, Pro202, Pro214, Pro220, Pro229, Pro235, Pro238, and Pro253 each carry the 4-hydroxyproline modification. Residues 139–157 (PGASGPAGARGNDGATGAA) are compositionally biased toward low complexity. Residues 159 to 171 (PPGPTGPAGPPGF) show a composition bias toward pro residues. Over residues 205–244 (AGAAGPAGNPGADGQPGAKGANGAPGIAGAPGFPGARGPS) the composition is skewed to low complexity. Lys256 is modified (5-hydroxylysine). 8 positions are modified to 4-hydroxyproline: Pro262, Pro265, Pro269, Pro278, Pro293, Pro299, Pro308, and Pro314. Residues 303-312 (GERGGPGSRG) are compositionally biased toward gly residues. Residue Lys323 is modified to 5-hydroxylysine. Residues Pro326, Pro332, Pro338, Pro347, Pro350, Pro359, Pro368, Pro374, Pro386, Pro395, Pro404, Pro407, Pro425, Pro442, Pro448, Pro454, Pro460, Pro466, Pro472, Pro484, Pro493, Pro506, Pro512, and Pro521 each carry the 4-hydroxyproline modification. Low complexity predominate over residues 341–367 (KGLTGSPGSPGPDGKTGPPGPAGQDGR). Residues 376-395 (ARGQAGVMGFPGPKGAAGEP) are compositionally biased toward low complexity. The span at 454 to 463 (PGEAGKPGEQ) shows a compositional bias: low complexity. Position 533 is a 5-hydroxylysine (Lys533). Residues Pro539, Pro554, and Pro560 each carry the 4-hydroxyproline modification. A compositionally biased stretch (low complexity) spans 566–580 (SGPSGPAGPTGARGA). Ser569 is modified (phosphoserine). 4-hydroxyproline is present on residues Pro581, Pro587, Pro590, Pro599, Pro605, Pro623, Pro632, and Pro641. A compositionally biased stretch (low complexity) spans 593–620 (AGFAGPPGADGQPGAKGEPGDAGAKGDA). 5-hydroxylysine is present on Lys644. Low complexity predominate over residues 649–665 (SAGPPGATGFPGAAGRV). Pro653 and Pro659 each carry 4-hydroxyproline. At Pro667 the chain carries 3-hydroxyproline. Pro668, Pro677, Pro680, Pro716, Pro725, Pro743, Pro752, Pro755, Pro761, Pro776, Pro782, Pro788, Pro796, and Pro802 each carry 4-hydroxyproline. Positions 710-725 (SGEKGSPGADGPAGAP) are enriched in low complexity. Pro residues predominate over residues 775 to 785 (PPGPMGPPGLA). Residue Lys811 is modified to 5-hydroxylysine. 3 positions are modified to 4-hydroxyproline: Pro819, Pro822, and Pro825. Residues 819-831 (PGAPGAPGAPGPV) show a composition bias toward pro residues. Low complexity predominate over residues 851–865 (AGPAGARGPAGPQGP). The span at 866-880 (RGDKGETGEQGDRGI) shows a compositional bias: basic and acidic residues. Residue Lys869 is modified to 5-hydroxylysine. Lys881 is subject to 5-hydroxylysine; alternate. Lys881 carries an O-linked (Gal...) hydroxylysine; alternate glycan. A 4-hydroxyproline mark is found at Pro896, Pro899, Pro917, and Pro932. Residues 899 to 932 (PGEQGPSGASGPAGPRGPPGSAGSPGKDGLNGLP) show a composition bias toward low complexity. Pro937 bears the 3-hydroxyproline mark. Pro938 is subject to 4-hydroxyproline. Residues 950-965 (VGPPGPPGPPGPPGPP) are compositionally biased toward pro residues. A 3-hydroxyproline modification is found at Pro952. Pro953 bears the 4-hydroxyproline mark. 3-hydroxyproline is present on Pro955. Pro956 is subject to 4-hydroxyproline. The residue at position 958 (Pro958) is a 3-hydroxyproline. 4-hydroxyproline occurs at positions 959, 962, and 965.

It belongs to the fibrillar collagen family. As to quaternary structure, trimers of one alpha 2(I) and two alpha 1(I) chains. In terms of processing, contains mostly 4-hydroxyproline. Proline residues at the third position of the tripeptide repeating unit (G-X-Y) are hydroxylated in some or all of the chains. Post-translationally, contains 3-hydroxyproline at a few sites. This modification occurs on the first proline residue in the sequence motif Gly-Pro-Hyp, where Hyp is 4-hydroxyproline. Lysine residues at the third position of the tripeptide repeating unit (G-X-Y) are 5-hydroxylated in some or all of the chains. In terms of processing, O-glycosylated on hydroxylated lysine residues. The O-linked glycan consists of a Glc-Gal disaccharide. Expressed in bones.

Its subcellular location is the secreted. It is found in the extracellular space. The protein resides in the extracellular matrix. Type I collagen is a member of group I collagen (fibrillar forming collagen). The chain is Collagen alpha-1(I) chain from Acratocnus sp. (strain SLP-2019) (Ground sloth).